The sequence spans 120 residues: Protein VraC (120 aa).

The sequence is that of Protein VraC from Staphylococcus epidermidis (strain ATCC 12228 / FDA PCI 1200).